A 380-amino-acid polypeptide reads, in one-letter code: RNA-binding motif protein, Y chromosome, family 9 (380 aa).

One can recognise an RRM domain in the interval 8–86 (GKIFIGGLNI…KRIKVKQARR (79 aa)). Disordered stretches follow at residues 82-226 (KQAR…STSR) and 279-358 (HEAP…YSAS). Residues 166-178 (RSATSAQTRSNTG) show a composition bias toward polar residues. Basic and acidic residues-rich tracts occupy residues 180-190 (RGREPHRREIS) and 333-351 (IDRE…HSPK).

Testis-specific.

It localises to the nucleus. Functionally, RNA-binding protein which may be involved in spermatogenesis. May be required for sperm development, possibly by participating in pre-mRNA splicing in the testis. In Mus musculus (Mouse), this protein is RNA-binding motif protein, Y chromosome, family 9.